The primary structure comprises 208 residues: 3-demethoxyubiquinol 3-hydroxylase (208 aa).

Fe cation is bound by residues E57, E87, H90, E139, E171, and H174.

This sequence belongs to the COQ7 family. The cofactor is Fe cation.

The protein resides in the cell membrane. The enzyme catalyses a 5-methoxy-2-methyl-3-(all-trans-polyprenyl)benzene-1,4-diol + AH2 + O2 = a 3-demethylubiquinol + A + H2O. The protein operates within cofactor biosynthesis; ubiquinone biosynthesis. Its function is as follows. Catalyzes the hydroxylation of 2-nonaprenyl-3-methyl-6-methoxy-1,4-benzoquinol during ubiquinone biosynthesis. The sequence is that of 3-demethoxyubiquinol 3-hydroxylase from Burkholderia ambifaria (strain MC40-6).